A 239-amino-acid chain; its full sequence is tRNA (guanine-N(1)-)-methyltransferase (239 aa).

S-adenosyl-L-methionine-binding positions include G108 and 127–132; that span reads LGDFVL.

Belongs to the RNA methyltransferase TrmD family. As to quaternary structure, homodimer.

Its subcellular location is the cytoplasm. It carries out the reaction guanosine(37) in tRNA + S-adenosyl-L-methionine = N(1)-methylguanosine(37) in tRNA + S-adenosyl-L-homocysteine + H(+). Specifically methylates guanosine-37 in various tRNAs. The chain is tRNA (guanine-N(1)-)-methyltransferase from Streptococcus thermophilus (strain CNRZ 1066).